Here is a 345-residue protein sequence, read N- to C-terminus: S-adenosylmethionine:tRNA ribosyltransferase-isomerase (345 aa).

This sequence belongs to the QueA family. Monomer.

It is found in the cytoplasm. It carries out the reaction 7-aminomethyl-7-carbaguanosine(34) in tRNA + S-adenosyl-L-methionine = epoxyqueuosine(34) in tRNA + adenine + L-methionine + 2 H(+). Its pathway is tRNA modification; tRNA-queuosine biosynthesis. Transfers and isomerizes the ribose moiety from AdoMet to the 7-aminomethyl group of 7-deazaguanine (preQ1-tRNA) to give epoxyqueuosine (oQ-tRNA). This Helicobacter acinonychis (strain Sheeba) protein is S-adenosylmethionine:tRNA ribosyltransferase-isomerase.